The primary structure comprises 403 residues: Vacuole membrane protein 1 homolog (403 aa).

The stretch at 7–33 forms a coiled coil; sequence IVLSNEKDIQLRIQQLEERKEKRKNVK. Helical transmembrane passes span 65 to 85, 102 to 122, 150 to 170, 175 to 195, 240 to 260, 263 to 283, 294 to 314, and 348 to 368; these read FLLF…YVPG, IWWV…LHTF, ANSF…WMIL, WAAL…YFVA, LIGN…NPLF, AGIT…ATFI, ACFV…SFIE, and VGLA…MSIV.

It belongs to the VMP1 family.

It localises to the membrane. It is found in the endoplasmic reticulum. It carries out the reaction a 1,2-diacyl-sn-glycero-3-phospho-L-serine(in) = a 1,2-diacyl-sn-glycero-3-phospho-L-serine(out). The enzyme catalyses cholesterol(in) = cholesterol(out). The catalysed reaction is a 1,2-diacyl-sn-glycero-3-phosphocholine(in) = a 1,2-diacyl-sn-glycero-3-phosphocholine(out). It catalyses the reaction a 1,2-diacyl-sn-glycero-3-phosphoethanolamine(in) = a 1,2-diacyl-sn-glycero-3-phosphoethanolamine(out). Its function is as follows. Phospholipid scramblase involved in lipid homeostasis and membrane dynamics processes. Required for autophagosome formation: participates in early stages of autophagosome biogenesis at the endoplasmic reticulum (ER) membrane by reequilibrating the leaflets of the ER as lipids are extracted. In addition to autophagy, involved in other processes in which phospholipid scramblase activity is required. The polypeptide is Vacuole membrane protein 1 homolog (Dictyostelium discoideum (Social amoeba)).